Consider the following 322-residue polypeptide: Ribokinase (322 aa).

Substrate contacts are provided by residues 25–27, 53–57, and Glu-154; these read MTD and GKGAN. ATP contacts are provided by residues Asn-199, 235–240, and Thr-256; that span reads TLGAEG. K(+) is bound by residues Asp-263 and Thr-265. ATP contacts are provided by residues 268–269 and Asn-295; that span reads GD. Position 269 (Asp-269) interacts with substrate. Residue Asp-269 is the Proton acceptor of the active site. K(+)-binding residues include Ser-301, Ala-304, Gly-306, and Ser-310.

It belongs to the carbohydrate kinase PfkB family. Ribokinase subfamily. As to quaternary structure, homodimer. The cofactor is Mg(2+).

Its subcellular location is the cytoplasm. The protein localises to the nucleus. It carries out the reaction D-ribose + ATP = D-ribose 5-phosphate + ADP + H(+). It participates in carbohydrate metabolism; D-ribose degradation; D-ribose 5-phosphate from beta-D-ribopyranose: step 2/2. With respect to regulation, activated by a monovalent cation that binds near, but not in, the active site. The most likely occupant of the site in vivo is potassium. Ion binding induces a conformational change that may alter substrate affinity. Competitively inhibited by phosphonoacetic acid, etidronate, 2-carboxethylphosphonic acid, N-(phosphonomethyl)glycine, N-(phosphonomethyl)iminodiacetic acid and clodronate. Functionally, catalyzes the phosphorylation of ribose at O-5 in a reaction requiring ATP and magnesium. The resulting D-ribose-5-phosphate can then be used either for sythesis of nucleotides, histidine, and tryptophan, or as a component of the pentose phosphate pathway. This is Ribokinase from Homo sapiens (Human).